A 365-amino-acid polypeptide reads, in one-letter code: DNA replication and repair protein RecF (365 aa).

30 to 37 (GRNAQGKT) contacts ATP.

Belongs to the RecF family.

Its subcellular location is the cytoplasm. Its function is as follows. The RecF protein is involved in DNA metabolism; it is required for DNA replication and normal SOS inducibility. RecF binds preferentially to single-stranded, linear DNA. It also seems to bind ATP. This is DNA replication and repair protein RecF from Streptococcus pneumoniae serotype 4 (strain ATCC BAA-334 / TIGR4).